The sequence spans 129 residues: M-zodatoxin-Lt8l (129 aa).

The N-terminal stretch at 1–20 (MKYFVVXXALVAAFACIAES) is a signal peptide. Residues 21 to 60 (KPAESEHELAEVEEENELADLEDAVWLEDLADLSDLEETR) constitute a propeptide that is removed on maturation.

This sequence belongs to the cationic peptide 06 (cytoinsectotoxin) family. Expressed by the venom gland.

The protein localises to the secreted. Its function is as follows. Insecticidal, cytolytic and antimicrobial peptide. Forms voltage-dependent, ion-permeable channels in membranes. At high concentration causes cell membrane lysis. The protein is M-zodatoxin-Lt8l (cit 1-12) of Lachesana tarabaevi (Spider).